We begin with the raw amino-acid sequence, 235 residues long: Large ribosomal subunit protein uL1 (235 aa).

The protein belongs to the universal ribosomal protein uL1 family. Part of the 50S ribosomal subunit.

Functionally, binds directly to 23S rRNA. The L1 stalk is quite mobile in the ribosome, and is involved in E site tRNA release. In terms of biological role, protein L1 is also a translational repressor protein, it controls the translation of the L11 operon by binding to its mRNA. The chain is Large ribosomal subunit protein uL1 from Methylobacterium sp. (strain 4-46).